The sequence spans 243 residues: Protein GrpE (243 aa).

It belongs to the GrpE family. In terms of assembly, homodimer.

It localises to the cytoplasm. In terms of biological role, participates actively in the response to hyperosmotic and heat shock by preventing the aggregation of stress-denatured proteins, in association with DnaK and GrpE. It is the nucleotide exchange factor for DnaK and may function as a thermosensor. Unfolded proteins bind initially to DnaJ; upon interaction with the DnaJ-bound protein, DnaK hydrolyzes its bound ATP, resulting in the formation of a stable complex. GrpE releases ADP from DnaK; ATP binding to DnaK triggers the release of the substrate protein, thus completing the reaction cycle. Several rounds of ATP-dependent interactions between DnaJ, DnaK and GrpE are required for fully efficient folding. In Mycoplasma mobile (strain ATCC 43663 / 163K / NCTC 11711) (Mesomycoplasma mobile), this protein is Protein GrpE.